The sequence spans 203 residues: MSRYRGPRFKKIRRLGALPGLTNKRPKAEKDLINQSRFVKKSQYRIRLEEKQKLRFHYGLTERQLLKYIRIAGKAKGSTGQVLLQLLEMRLDNILFRLGMALTIPAARQLVNHRHVLVNGRIVDIPSYRCKPLDIITAKDKQQSRTLIQNSLNSSPHAKIPNHLTLDLFQYKGIVNQIINSKWVGLKINEFLIVEYYSRQIKT.

The S4 RNA-binding domain maps to 89–152 (MRLDNILFRL…QSRTLIQNSL (64 aa)).

This sequence belongs to the universal ribosomal protein uS4 family. As to quaternary structure, part of the 30S ribosomal subunit. Contacts protein S5. The interaction surface between S4 and S5 is involved in control of translational fidelity.

It is found in the plastid. One of the primary rRNA binding proteins, it binds directly to 16S rRNA where it nucleates assembly of the body of the 30S subunit. In terms of biological role, with S5 and S12 plays an important role in translational accuracy. The sequence is that of Small ribosomal subunit protein uS4c (rps4) from Orobanche minor (Small broomrape).